The following is a 311-amino-acid chain: JNK1/MAPK8-associated membrane protein (311 aa).

The Lumenal segment spans residues Met-1–Asp-57. A glycan (N-linked (GlcNAc...) asparagine) is linked at Asn-22. The helical transmembrane segment at Trp-58–Trp-78 threads the bilayer. Topologically, residues Tyr-79–Ala-87 are cytoplasmic. Residues Leu-88–Val-108 form a helical membrane-spanning segment. Residues Ser-109 to Ala-149 are Lumenal-facing. A helical transmembrane segment spans residues Val-150–Leu-170. Over Leu-171–Arg-188 the chain is Cytoplasmic. The chain crosses the membrane as a helical span at residues Phe-189–Gly-209. A topological domain (lumenal) is located at residue Gly-210. A helical membrane pass occupies residues Gly-211–Val-231. The Cytoplasmic portion of the chain corresponds to Tyr-232–Arg-250. A helical membrane pass occupies residues Leu-251–Val-271. The Lumenal segment spans residues Asp-272–Asp-277. Residues Leu-278–Thr-298 form a helical membrane-spanning segment. Over Glu-299 to His-311 the chain is Cytoplasmic.

Interacts with RNF5 and MAPK8, but not with MAPK9. Binding to MAPK8 occurs before and after exposure to stress, such as UV irradiation. After exposure to stress, interacts with phosphorylated MAPK8. Competes with DUSP10 for MAPK8 binding. Associates with multiple components of the proteasome and with ERAD regulatory proteins including AMFR/GP78, CANX, PSMC1, PSMC2, PSMC3/TBP1, PSMC5, PSMC6, PSMD8, SEC61-ALPHA and UFD1. Interacts with DERL1 (in the presence of misfolded protein CFTR(F508del)). In terms of processing, ubiquitinated by RNF5 via 'Lys-63'-linked ubiquitin linkage in a UBE2N-dependent manner. Ubiquitination decreases association with components of the proteasome and ERAD.

It is found in the endoplasmic reticulum membrane. Functionally, regulates the duration of MAPK8 activity in response to various stress stimuli. Facilitates degradation of misfolded endoplasmic reticulum (ER) proteins through the recruitment of components of the proteasome and endoplasmic reticulum-associated degradation (ERAD) system. This Homo sapiens (Human) protein is JNK1/MAPK8-associated membrane protein (JKAMP).